Reading from the N-terminus, the 250-residue chain is 7-carboxy-7-deazaguanine synthase (250 aa).

Substrate contacts are provided by residues 15–17 (VQG) and R30. One can recognise a Radical SAM core domain in the interval 21–250 (LIGLRQVFIR…PQTHRFMGQL (230 aa)). 3 residues coordinate [4Fe-4S] cluster: C34, C38, and C41. T43 is a Mg(2+) binding site. T96 contacts substrate. Residue G98 coordinates S-adenosyl-L-methionine.

This sequence belongs to the radical SAM superfamily. 7-carboxy-7-deazaguanine synthase family. Homodimer. [4Fe-4S] cluster serves as cofactor. It depends on S-adenosyl-L-methionine as a cofactor. The cofactor is Mg(2+).

It carries out the reaction 6-carboxy-5,6,7,8-tetrahydropterin + H(+) = 7-carboxy-7-deazaguanine + NH4(+). It participates in purine metabolism; 7-cyano-7-deazaguanine biosynthesis. Functionally, catalyzes the complex heterocyclic radical-mediated conversion of 6-carboxy-5,6,7,8-tetrahydropterin (CPH4) to 7-carboxy-7-deazaguanine (CDG), a step common to the biosynthetic pathways of all 7-deazapurine-containing compounds. The protein is 7-carboxy-7-deazaguanine synthase of Geobacter sulfurreducens (strain ATCC 51573 / DSM 12127 / PCA).